Here is a 294-residue protein sequence, read N- to C-terminus: Acetyl-coenzyme A carboxylase carboxyl transferase subunit beta (294 aa).

In terms of domain architecture, CoA carboxyltransferase N-terminal spans 30 to 294 (IMTKCPECKK…PEVGGEADGE (265 aa)). Cysteine 34, cysteine 37, cysteine 53, and cysteine 56 together coordinate Zn(2+). The C4-type zinc finger occupies 34–56 (CPECKKIMYTKELQKNLMVCNYC).

Belongs to the AccD/PCCB family. As to quaternary structure, acetyl-CoA carboxylase is a heterohexamer composed of biotin carboxyl carrier protein (AccB), biotin carboxylase (AccC) and two subunits each of ACCase subunit alpha (AccA) and ACCase subunit beta (AccD). It depends on Zn(2+) as a cofactor.

The protein resides in the cytoplasm. The catalysed reaction is N(6)-carboxybiotinyl-L-lysyl-[protein] + acetyl-CoA = N(6)-biotinyl-L-lysyl-[protein] + malonyl-CoA. It functions in the pathway lipid metabolism; malonyl-CoA biosynthesis; malonyl-CoA from acetyl-CoA: step 1/1. Its function is as follows. Component of the acetyl coenzyme A carboxylase (ACC) complex. Biotin carboxylase (BC) catalyzes the carboxylation of biotin on its carrier protein (BCCP) and then the CO(2) group is transferred by the transcarboxylase to acetyl-CoA to form malonyl-CoA. The chain is Acetyl-coenzyme A carboxylase carboxyl transferase subunit beta from Listeria monocytogenes serotype 4b (strain F2365).